Here is a 255-residue protein sequence, read N- to C-terminus: Triosephosphate isomerase (255 aa).

9–11 contacts substrate; it reads NWK. His-95 (electrophile) is an active-site residue. The active-site Proton acceptor is Glu-167. Substrate contacts are provided by residues Gly-173, Ser-212, and 233–234; that span reads GG.

The protein belongs to the triosephosphate isomerase family. As to quaternary structure, homodimer.

The protein localises to the cytoplasm. The catalysed reaction is D-glyceraldehyde 3-phosphate = dihydroxyacetone phosphate. The protein operates within carbohydrate biosynthesis; gluconeogenesis. Its pathway is carbohydrate degradation; glycolysis; D-glyceraldehyde 3-phosphate from glycerone phosphate: step 1/1. In terms of biological role, involved in the gluconeogenesis. Catalyzes stereospecifically the conversion of dihydroxyacetone phosphate (DHAP) to D-glyceraldehyde-3-phosphate (G3P). The protein is Triosephosphate isomerase of Enterobacter cloacae.